We begin with the raw amino-acid sequence, 597 residues long: Arginine--tRNA ligase (597 aa).

A 'HIGH' region motif is present at residues 138 to 148 (ANPTGPMHVGH).

Belongs to the class-I aminoacyl-tRNA synthetase family. In terms of assembly, monomer.

Its subcellular location is the cytoplasm. It carries out the reaction tRNA(Arg) + L-arginine + ATP = L-arginyl-tRNA(Arg) + AMP + diphosphate. This Rhodopseudomonas palustris (strain HaA2) protein is Arginine--tRNA ligase.